Reading from the N-terminus, the 231-residue chain is 5'-methylthioadenosine/S-adenosylhomocysteine nucleosidase (231 aa).

Glutamate 12 serves as the catalytic Proton acceptor. Residues glycine 78, methionine 153, and 174 to 175 contribute to the substrate site; that span reads ME. Aspartate 198 serves as the catalytic Proton donor.

It belongs to the PNP/UDP phosphorylase family. MtnN subfamily.

The catalysed reaction is S-adenosyl-L-homocysteine + H2O = S-(5-deoxy-D-ribos-5-yl)-L-homocysteine + adenine. It catalyses the reaction S-methyl-5'-thioadenosine + H2O = 5-(methylsulfanyl)-D-ribose + adenine. It carries out the reaction 5'-deoxyadenosine + H2O = 5-deoxy-D-ribose + adenine. Its pathway is amino-acid biosynthesis; L-methionine biosynthesis via salvage pathway; S-methyl-5-thio-alpha-D-ribose 1-phosphate from S-methyl-5'-thioadenosine (hydrolase route): step 1/2. Catalyzes the irreversible cleavage of the glycosidic bond in both 5'-methylthioadenosine (MTA) and S-adenosylhomocysteine (SAH/AdoHcy) to adenine and the corresponding thioribose, 5'-methylthioribose and S-ribosylhomocysteine, respectively. Also cleaves 5'-deoxyadenosine, a toxic by-product of radical S-adenosylmethionine (SAM) enzymes, into 5-deoxyribose and adenine. In Bacillus licheniformis (strain ATCC 14580 / DSM 13 / JCM 2505 / CCUG 7422 / NBRC 12200 / NCIMB 9375 / NCTC 10341 / NRRL NRS-1264 / Gibson 46), this protein is 5'-methylthioadenosine/S-adenosylhomocysteine nucleosidase.